Reading from the N-terminus, the 394-residue chain is Phosphopentomutase (394 aa).

Asp-14, Asp-287, His-292, Asp-328, His-329, and His-340 together coordinate Mn(2+).

This sequence belongs to the phosphopentomutase family. Requires Mn(2+) as cofactor.

The protein resides in the cytoplasm. The catalysed reaction is 2-deoxy-alpha-D-ribose 1-phosphate = 2-deoxy-D-ribose 5-phosphate. It carries out the reaction alpha-D-ribose 1-phosphate = D-ribose 5-phosphate. It functions in the pathway carbohydrate degradation; 2-deoxy-D-ribose 1-phosphate degradation; D-glyceraldehyde 3-phosphate and acetaldehyde from 2-deoxy-alpha-D-ribose 1-phosphate: step 1/2. Its function is as follows. Isomerase that catalyzes the conversion of deoxy-ribose 1-phosphate (dRib-1-P) and ribose 1-phosphate (Rib-1-P) to deoxy-ribose 5-phosphate (dRib-5-P) and ribose 5-phosphate (Rib-5-P), respectively. The protein is Phosphopentomutase of Listeria welshimeri serovar 6b (strain ATCC 35897 / DSM 20650 / CCUG 15529 / CIP 8149 / NCTC 11857 / SLCC 5334 / V8).